Reading from the N-terminus, the 283-residue chain is Formamidopyrimidine-DNA glycosylase (283 aa).

Proline 2 serves as the catalytic Schiff-base intermediate with DNA. Glutamate 3 (proton donor) is an active-site residue. Lysine 58 (proton donor; for beta-elimination activity) is an active-site residue. Histidine 100, arginine 119, and arginine 162 together coordinate DNA. The FPG-type zinc finger occupies 247–283 (RVYGREGQPCVTPGCRGLVGRIVQSGRSSFHCPECQR). Arginine 273 functions as the Proton donor; for delta-elimination activity in the catalytic mechanism.

The protein belongs to the FPG family. In terms of assembly, monomer. Zn(2+) serves as cofactor.

The enzyme catalyses Hydrolysis of DNA containing ring-opened 7-methylguanine residues, releasing 2,6-diamino-4-hydroxy-5-(N-methyl)formamidopyrimidine.. It carries out the reaction 2'-deoxyribonucleotide-(2'-deoxyribose 5'-phosphate)-2'-deoxyribonucleotide-DNA = a 3'-end 2'-deoxyribonucleotide-(2,3-dehydro-2,3-deoxyribose 5'-phosphate)-DNA + a 5'-end 5'-phospho-2'-deoxyribonucleoside-DNA + H(+). Involved in base excision repair of DNA damaged by oxidation or by mutagenic agents. Acts as a DNA glycosylase that recognizes and removes damaged bases. Has a preference for oxidized purines, such as 7,8-dihydro-8-oxoguanine (8-oxoG). Has AP (apurinic/apyrimidinic) lyase activity and introduces nicks in the DNA strand. Cleaves the DNA backbone by beta-delta elimination to generate a single-strand break at the site of the removed base with both 3'- and 5'-phosphates. The chain is Formamidopyrimidine-DNA glycosylase from Cereibacter sphaeroides (strain ATCC 17025 / ATH 2.4.3) (Rhodobacter sphaeroides).